The chain runs to 95 residues: Citrate lyase acyl carrier protein (95 aa).

Ser-14 is modified (O-(phosphoribosyl dephospho-coenzyme A)serine).

It belongs to the CitD family. In terms of assembly, oligomer with a subunit composition of (alpha,beta,gamma)6.

It localises to the cytoplasm. Functionally, covalent carrier of the coenzyme of citrate lyase. The protein is Citrate lyase acyl carrier protein of Haemophilus influenzae (strain 86-028NP).